The following is a 317-amino-acid chain: Brain-specific serine protease 4 (317 aa).

The first 32 residues, 1–32 (MVVSGAPPALGGGCLGTFTSLLLLASTAILNA), serve as a signal peptide directing secretion. Residues 50 to 290 (VVGGEDSTDS…HRSWVEKIVQ (241 aa)) form the Peptidase S1 domain. Residue N70 is glycosylated (N-linked (GlcNAc...) asparagine). C75 and C91 are oxidised to a cystine. Active-site charge relay system residues include H90 and D141. Cystine bridges form between C175-C248, C208-C227, and C238-C266. S242 serves as the catalytic Charge relay system.

It belongs to the peptidase S1 family. In terms of tissue distribution, expressed abundantly in the epithelial cells of the airways, including trachea, esophagus and fetal lung. Scarce in adult lung. Expressed at low levels in placenta, pancreas, prostate and thyroid gland.

The protein resides in the secreted. Functionally, preferentially cleaves the synthetic substrate H-D-Leu-Thr-Arg-pNA compared to tosyl-Gly-Pro-Arg-pNA. This Homo sapiens (Human) protein is Brain-specific serine protease 4 (PRSS22).